The sequence spans 696 residues: Translation initiation factor IF-2 (696 aa).

Positions 187–361 (ERPPVVTVMG…EMQEIKGIPD (175 aa)) constitute a tr-type G domain. Residues 196–203 (GHVDHGKT) form a G1 region. GTP is bound at residue 196-203 (GHVDHGKT). The segment at 221-225 (GITQS) is G2. Residues 242 to 245 (DTPG) form a G3 region. GTP is bound by residues 242–246 (DTPGH) and 296–299 (NKID). The tract at residues 296–299 (NKID) is G4. The interval 333-335 (SAK) is G5.

Belongs to the TRAFAC class translation factor GTPase superfamily. Classic translation factor GTPase family. IF-2 subfamily.

It localises to the cytoplasm. One of the essential components for the initiation of protein synthesis. Protects formylmethionyl-tRNA from spontaneous hydrolysis and promotes its binding to the 30S ribosomal subunits. Also involved in the hydrolysis of GTP during the formation of the 70S ribosomal complex. This is Translation initiation factor IF-2 from Thermosipho africanus (strain TCF52B).